We begin with the raw amino-acid sequence, 320 residues long: Malate dehydrogenase (320 aa).

NAD(+) contacts are provided by residues 10 to 15 (GSGMIG) and Asp-34. Positions 83 and 89 each coordinate substrate. NAD(+) is bound by residues Asn-96 and 119–121 (ITN). Asn-121 and Arg-152 together coordinate substrate. Residue His-176 is the Proton acceptor of the active site.

This sequence belongs to the LDH/MDH superfamily. MDH type 3 family.

It carries out the reaction (S)-malate + NAD(+) = oxaloacetate + NADH + H(+). Functionally, catalyzes the reversible oxidation of malate to oxaloacetate. The sequence is that of Malate dehydrogenase from Bartonella tribocorum (strain CIP 105476 / IBS 506).